A 354-amino-acid chain; its full sequence is Ferrochelatase (354 aa).

Positions 214 and 295 each coordinate Fe cation.

Belongs to the ferrochelatase family.

Its subcellular location is the cytoplasm. It catalyses the reaction heme b + 2 H(+) = protoporphyrin IX + Fe(2+). It participates in porphyrin-containing compound metabolism; protoheme biosynthesis; protoheme from protoporphyrin-IX: step 1/1. Its function is as follows. Catalyzes the ferrous insertion into protoporphyrin IX. In Burkholderia ambifaria (strain MC40-6), this protein is Ferrochelatase.